The sequence spans 381 residues: Anti-sigma-I factor RsgI (381 aa).

The Cytoplasmic portion of the chain corresponds to 1-63 (MRRGIIVEKN…FDFFKLRPFK (63 aa)). In terms of domain architecture, RsgI N-terminal anti-sigma spans 2 to 50 (RRGIIVEKNKKFVTLLTPDGQFLKAKNDRHSYEIGEEIMLPSETRMGRR). A helical transmembrane segment spans residues 64–84 (MGIFTMTAIMLFIFIVLPVFS). The Extracellular portion of the chain corresponds to 85–381 (NNKAYAYMTI…NEDSPSAPGE (297 aa)). The interval 198 to 381 (SDMQTREKAK…NEDSPSAPGE (184 aa)) is disordered. Basic and acidic residues-rich tracts occupy residues 200-210 (MQTREKAKKEG), 219-244 (SNEKNDNKDIKDDSSKPSGEEDQKSD), 273-321 (GDQK…DKGN), and 349-359 (SRRDNASDRRN).

Interacts (via RsgI N-terminal anti-sigma domain) with SigI.

The protein localises to the cell membrane. Its function is as follows. Anti-sigma factor for SigI. Negatively regulates SigI activity through direct interaction. The protein is Anti-sigma-I factor RsgI of Bacillus subtilis (strain 168).